Here is a 185-residue protein sequence, read N- to C-terminus: Large ribosomal subunit protein uL22 (185 aa).

The protein belongs to the universal ribosomal protein uL22 family. As to quaternary structure, part of the 50S ribosomal subunit.

Its function is as follows. This protein binds specifically to 23S rRNA. It makes multiple contacts with different domains of the 23S rRNA in the assembled 50S subunit and ribosome. The globular domain of the protein is located near the polypeptide exit tunnel on the outside of the subunit, while an extended beta-hairpin is found that lines the wall of the exit tunnel in the center of the 70S ribosome. The polypeptide is Large ribosomal subunit protein uL22 (Pyrobaculum aerophilum (strain ATCC 51768 / DSM 7523 / JCM 9630 / CIP 104966 / NBRC 100827 / IM2)).